The sequence spans 215 residues: Probable transaldolase (215 aa).

Catalysis depends on K83, which acts as the Schiff-base intermediate with substrate.

Belongs to the transaldolase family. Type 3B subfamily.

The protein localises to the cytoplasm. It catalyses the reaction D-sedoheptulose 7-phosphate + D-glyceraldehyde 3-phosphate = D-erythrose 4-phosphate + beta-D-fructose 6-phosphate. It participates in carbohydrate degradation; pentose phosphate pathway; D-glyceraldehyde 3-phosphate and beta-D-fructose 6-phosphate from D-ribose 5-phosphate and D-xylulose 5-phosphate (non-oxidative stage): step 2/3. Its function is as follows. Transaldolase is important for the balance of metabolites in the pentose-phosphate pathway. This is Probable transaldolase from Methanococcus maripaludis (strain DSM 14266 / JCM 13030 / NBRC 101832 / S2 / LL).